The following is a 151-amino-acid chain: Large ribosomal subunit protein bL9 (151 aa).

It belongs to the bacterial ribosomal protein bL9 family.

Binds to the 23S rRNA. The polypeptide is Large ribosomal subunit protein bL9 (Desulforapulum autotrophicum (strain ATCC 43914 / DSM 3382 / VKM B-1955 / HRM2) (Desulfobacterium autotrophicum)).